A 355-amino-acid polypeptide reads, in one-letter code: 3-isopropylmalate dehydrogenase (355 aa).

Substrate contacts are provided by Arg-90, Arg-100, Arg-128, and Asp-222. Asp-222, Asp-246, and Asp-250 together coordinate Mg(2+). 280-292 (GSAPDIAGKGIAN) serves as a coordination point for NAD(+).

It belongs to the isocitrate and isopropylmalate dehydrogenases family. LeuB type 1 subfamily. In terms of assembly, homodimer. Requires Mg(2+) as cofactor. Mn(2+) serves as cofactor.

The protein localises to the cytoplasm. It carries out the reaction (2R,3S)-3-isopropylmalate + NAD(+) = 4-methyl-2-oxopentanoate + CO2 + NADH. It participates in amino-acid biosynthesis; L-leucine biosynthesis; L-leucine from 3-methyl-2-oxobutanoate: step 3/4. Its function is as follows. Catalyzes the oxidation of 3-carboxy-2-hydroxy-4-methylpentanoate (3-isopropylmalate) to 3-carboxy-4-methyl-2-oxopentanoate. The product decarboxylates to 4-methyl-2 oxopentanoate. This is 3-isopropylmalate dehydrogenase from Burkholderia lata (strain ATCC 17760 / DSM 23089 / LMG 22485 / NCIMB 9086 / R18194 / 383).